We begin with the raw amino-acid sequence, 437 residues long: UDP-glucosyl transferase 79L3 (437 aa).

Histidine 18 functions as the Proton acceptor in the catalytic mechanism. Aspartate 117 (charge relay) is an active-site residue. Positions 254, 312, 313, 330, 335, and 338 each coordinate UDP.

The protein belongs to the UDP-glycosyltransferase family. In terms of tissue distribution, mainly expressed in flowers, flower buds and young leaves, and, to a lesser extent, in old leaves, stems and roots.

Its pathway is secondary metabolite biosynthesis; terpenoid biosynthesis. Functionally, component of the oleanane-type triterpene saponins (e.g. saponarioside A and saponarioside B) biosynthetic pathway, leading to the production of natural products with detergent properties used as traditional sources of soap. A glycosyltransferase that mediates the conversion of QA-triFR to QA-triFRX via the elongation of the C-28 sugar chain with a D-xylose. The chain is UDP-glucosyl transferase 79L3 from Saponaria officinalis (Common soapwort).